Reading from the N-terminus, the 44-residue chain is Photosystem I reaction center subunit IX (44 aa).

Residues 7–27 (YLSVAPVLSTLWFGALAGLLI) traverse the membrane as a helical segment.

This sequence belongs to the PsaJ family.

It localises to the plastid. Its subcellular location is the chloroplast thylakoid membrane. May help in the organization of the PsaE and PsaF subunits. The chain is Photosystem I reaction center subunit IX from Coffea arabica (Arabian coffee).